Reading from the N-terminus, the 122-residue chain is Large ribosomal subunit protein uL22 (122 aa).

Positions 102–122 (VAEGKEMKSSKSHKKNQAEGK) are disordered.

It belongs to the universal ribosomal protein uL22 family. In terms of assembly, part of the 50S ribosomal subunit.

Its function is as follows. This protein binds specifically to 23S rRNA; its binding is stimulated by other ribosomal proteins, e.g. L4, L17, and L20. It is important during the early stages of 50S assembly. It makes multiple contacts with different domains of the 23S rRNA in the assembled 50S subunit and ribosome. Functionally, the globular domain of the protein is located near the polypeptide exit tunnel on the outside of the subunit, while an extended beta-hairpin is found that lines the wall of the exit tunnel in the center of the 70S ribosome. This chain is Large ribosomal subunit protein uL22, found in Helicobacter pylori (strain ATCC 700392 / 26695) (Campylobacter pylori).